The primary structure comprises 259 residues: Probable WRKY transcription factor 65 (259 aa).

A compositionally biased stretch (basic and acidic residues) spans 1–17; sequence MKRGLDMARSYNDHESS. 2 disordered regions span residues 1–101 and 126–165; these read MKRG…RCSS and TSEH…EEED. Over residues 18-31 the composition is skewed to polar residues; sequence QETGPESPNSSTFN. Positions 47-69 are enriched in basic and acidic residues; that stretch reads RSVEKRVVNVPMKEMEGSRHKGD. Positions 68–134 form a DNA-binding region, WRKY; that stretch reads GDTTPPSDSW…YTSEHNHPWP (67 aa). Residues 154–165 are compositionally biased toward acidic residues; that stretch reads EPEVEPEAEEED.

Its subcellular location is the nucleus. Functionally, transcription factor. Interacts specifically with the W box (5'-(T)TGAC[CT]-3'), a frequently occurring elicitor-responsive cis-acting element. This is Probable WRKY transcription factor 65 (WRKY65) from Arabidopsis thaliana (Mouse-ear cress).